The primary structure comprises 186 residues: Large ribosomal subunit protein uL5 (186 aa).

The protein belongs to the universal ribosomal protein uL5 family. Part of the 50S ribosomal subunit; part of the 5S rRNA/L5/L18/L25 subcomplex. Contacts the 5S rRNA and the P site tRNA. Forms a bridge to the 30S subunit in the 70S ribosome.

In terms of biological role, this is one of the proteins that bind and probably mediate the attachment of the 5S RNA into the large ribosomal subunit, where it forms part of the central protuberance. In the 70S ribosome it contacts protein S13 of the 30S subunit (bridge B1b), connecting the 2 subunits; this bridge is implicated in subunit movement. Contacts the P site tRNA; the 5S rRNA and some of its associated proteins might help stabilize positioning of ribosome-bound tRNAs. The chain is Large ribosomal subunit protein uL5 from Maricaulis maris (strain MCS10) (Caulobacter maris).